A 152-amino-acid polypeptide reads, in one-letter code: Putative pre-16S rRNA nuclease (152 aa).

The protein belongs to the YqgF nuclease family.

It localises to the cytoplasm. Its function is as follows. Could be a nuclease involved in processing of the 5'-end of pre-16S rRNA. The chain is Putative pre-16S rRNA nuclease from Sphingopyxis alaskensis (strain DSM 13593 / LMG 18877 / RB2256) (Sphingomonas alaskensis).